Reading from the N-terminus, the 260-residue chain is Global transcriptional regulator CodY (260 aa).

A GAF domain region spans residues 1–159 (MPNLLEKTRK…SSTVVGIQLL (159 aa)). Positions 207–226 (ASVIADRIGITRSVIVNALR) form a DNA-binding region, H-T-H motif.

This sequence belongs to the CodY family.

Its subcellular location is the cytoplasm. DNA-binding global transcriptional regulator which is involved in the adaptive response to starvation and acts by directly or indirectly controlling the expression of numerous genes in response to nutrient availability. During rapid exponential growth, CodY is highly active and represses genes whose products allow adaptation to nutrient depletion. In Streptococcus pyogenes serotype M4 (strain MGAS10750), this protein is Global transcriptional regulator CodY.